A 957-amino-acid polypeptide reads, in one-letter code: Protein translocase subunit SecA (957 aa).

ATP is bound by residues Q87, 105–109, and D512; that span reads GEGKT. Residues 924–957 form a disordered region; it reads AAPAQAPSKSKRSAGRNDPCPCGSGQKYKKCCGK. Residues C943, C945, C954, and C955 each coordinate Zn(2+).

Belongs to the SecA family. Monomer and homodimer. Part of the essential Sec protein translocation apparatus which comprises SecA, SecYEG and auxiliary proteins SecDF-YajC and YidC. The cofactor is Zn(2+).

The protein resides in the cell inner membrane. Its subcellular location is the cytoplasm. It carries out the reaction ATP + H2O + cellular proteinSide 1 = ADP + phosphate + cellular proteinSide 2.. Part of the Sec protein translocase complex. Interacts with the SecYEG preprotein conducting channel. Has a central role in coupling the hydrolysis of ATP to the transfer of proteins into and across the cell membrane, serving as an ATP-driven molecular motor driving the stepwise translocation of polypeptide chains across the membrane. The protein is Protein translocase subunit SecA of Geobacter sp. (strain M21).